A 394-amino-acid polypeptide reads, in one-letter code: Cystathionine gamma-lyase (394 aa).

Residues 37–56 (KQSSPANPIGTYEYSRSQNP) are disordered. Residues arginine 52, tyrosine 104, and arginine 109 each contribute to the substrate site. An N6-(pyridoxal phosphate)lysine modification is found at lysine 204. Glutamate 334 lines the substrate pocket. Residue serine 362 is modified to Phosphoserine.

The protein belongs to the trans-sulfuration enzymes family. Homotetramer. Requires pyridoxal 5'-phosphate as cofactor.

Its subcellular location is the cytoplasm. It catalyses the reaction L,L-cystathionine + H2O = 2-oxobutanoate + L-cysteine + NH4(+). It functions in the pathway amino-acid biosynthesis; L-cysteine biosynthesis; L-cysteine from L-homocysteine and L-serine: step 2/2. Functionally, catalyzes the production of cysteine from cystathionine in the reverse transsulfuration pathway for the biosynthesis of sulfur-containing amino acids cysteine and methionine. In this pathway, homocysteine sulfur is converted to cysteine sulfur. Also has cystathionine beta-lyase and cystathionine gamma-synthase activities in vitro. Cystathionine beta-lyase may be physiological, while cystathionine gamma-synthase activity is not, as the required substrate O-succinyl-L-homoserine(OSH) does not occur naturally in S.cerevisiae. In Saccharomyces cerevisiae (strain ATCC 204508 / S288c) (Baker's yeast), this protein is Cystathionine gamma-lyase.